The sequence spans 351 residues: Nicotinate-nucleotide--dimethylbenzimidazole phosphoribosyltransferase (351 aa).

The active-site Proton acceptor is glutamate 319.

Belongs to the CobT family.

It carries out the reaction 5,6-dimethylbenzimidazole + nicotinate beta-D-ribonucleotide = alpha-ribazole 5'-phosphate + nicotinate + H(+). Its pathway is nucleoside biosynthesis; alpha-ribazole biosynthesis; alpha-ribazole from 5,6-dimethylbenzimidazole: step 1/2. In terms of biological role, catalyzes the synthesis of alpha-ribazole-5'-phosphate from nicotinate mononucleotide (NAMN) and 5,6-dimethylbenzimidazole (DMB). In Desulforamulus reducens (strain ATCC BAA-1160 / DSM 100696 / MI-1) (Desulfotomaculum reducens), this protein is Nicotinate-nucleotide--dimethylbenzimidazole phosphoribosyltransferase.